The primary structure comprises 521 residues: Phosphoethanolamine transferase EptA (521 aa).

Transmembrane regions (helical) follow at residues 18–38, 47–67, 79–99, 118–138, 150–170, and 182–202; these read AGLLYSLIFGVLYHFPLFVYV, FIAMMVVVLFCVNGALFLALG, IVFSLLNSVAFYFISAYKVFL, FLSVKLFVFIVVFGVLPGYVI, APFLAILALVFIFIASALANT, and FIGGLILPFAYSVNAFRVSAL.

The protein belongs to the phosphoethanolamine transferase family. EptA subfamily.

It is found in the cell inner membrane. It participates in bacterial outer membrane biogenesis; LPS lipid A biosynthesis. In terms of biological role, probably catalyzes the addition of a phosphoethanolamine moiety to the dephosphorylated 1-position of the disaccharide backbone of lipid A. Lipid A that is 1-phosphorylated is not a substrate for this enzyme. This Helicobacter pylori (strain ATCC 700392 / 26695) (Campylobacter pylori) protein is Phosphoethanolamine transferase EptA.